A 498-amino-acid chain; its full sequence is ATP synthase subunit beta, chloroplastic (498 aa).

ATP is bound at residue 172 to 179; the sequence is GGAGVGKT.

It belongs to the ATPase alpha/beta chains family. As to quaternary structure, F-type ATPases have 2 components, CF(1) - the catalytic core - and CF(0) - the membrane proton channel. CF(1) has five subunits: alpha(3), beta(3), gamma(1), delta(1), epsilon(1). CF(0) has four main subunits: a(1), b(1), b'(1) and c(9-12).

It is found in the plastid. The protein localises to the chloroplast thylakoid membrane. It catalyses the reaction ATP + H2O + 4 H(+)(in) = ADP + phosphate + 5 H(+)(out). Functionally, produces ATP from ADP in the presence of a proton gradient across the membrane. The catalytic sites are hosted primarily by the beta subunits. The protein is ATP synthase subunit beta, chloroplastic of Drimys granadensis.